Here is a 121-residue protein sequence, read N- to C-terminus: Large ribosomal subunit protein bL12 (121 aa).

This sequence belongs to the bacterial ribosomal protein bL12 family. As to quaternary structure, homodimer. Part of the ribosomal stalk of the 50S ribosomal subunit. Forms a multimeric L10(L12)X complex, where L10 forms an elongated spine to which 2 to 4 L12 dimers bind in a sequential fashion. Binds GTP-bound translation factors.

Forms part of the ribosomal stalk which helps the ribosome interact with GTP-bound translation factors. Is thus essential for accurate translation. This is Large ribosomal subunit protein bL12 from Xanthomonas campestris pv. campestris (strain B100).